We begin with the raw amino-acid sequence, 64 residues long: Large ribosomal subunit protein bL35 (64 aa).

The disordered stretch occupies residues Ile-22–Leu-44.

Belongs to the bacterial ribosomal protein bL35 family.

This Clavibacter sepedonicus (Clavibacter michiganensis subsp. sepedonicus) protein is Large ribosomal subunit protein bL35.